A 114-amino-acid chain; its full sequence is UPF0145 protein SSO1976 (114 aa).

This sequence belongs to the UPF0145 family.

The protein is UPF0145 protein SSO1976 of Saccharolobus solfataricus (strain ATCC 35092 / DSM 1617 / JCM 11322 / P2) (Sulfolobus solfataricus).